The primary structure comprises 119 residues: Protein phosphatase EYA4 (119 aa).

The protein belongs to the HAD-like hydrolase superfamily. EYA family. It depends on Mg(2+) as a cofactor.

It localises to the cytoplasm. Its subcellular location is the nucleus. The enzyme catalyses O-phospho-L-tyrosyl-[protein] + H2O = L-tyrosyl-[protein] + phosphate. Its function is as follows. Tyrosine phosphatase that specifically dephosphorylates 'Tyr-142' of histone H2AX (H2AXY142ph). 'Tyr-142' phosphorylation of histone H2AX plays a central role in DNA repair and acts as a mark that distinguishes between apoptotic and repair responses to genotoxic stress. Promotes efficient DNA repair by dephosphorylating H2AX, promoting the recruitment of DNA repair complexes containing MDC1. Its function as histone phosphatase probably explains its role in transcription regulation during organogenesis. May be involved in development of the eye. This is Protein phosphatase EYA4 (eya4) from Takifugu rubripes (Japanese pufferfish).